An 88-amino-acid chain; its full sequence is Cell division topological specificity factor (88 aa).

The protein belongs to the MinE family.

Its function is as follows. Prevents the cell division inhibition by proteins MinC and MinD at internal division sites while permitting inhibition at polar sites. This ensures cell division at the proper site by restricting the formation of a division septum at the midpoint of the long axis of the cell. The polypeptide is Cell division topological specificity factor (Citrobacter koseri (strain ATCC BAA-895 / CDC 4225-83 / SGSC4696)).